The sequence spans 691 residues: DNA-directed RNA polymerase subunit beta' (691 aa).

The Zn(2+) site is built by cysteine 76, cysteine 78, cysteine 94, and cysteine 97. 3 residues coordinate Mg(2+): aspartate 496, aspartate 498, and aspartate 500.

This sequence belongs to the RNA polymerase beta' chain family. RpoC1 subfamily. Mg(2+) is required as a cofactor. Zn(2+) serves as cofactor.

The protein localises to the plastid. The enzyme catalyses RNA(n) + a ribonucleoside 5'-triphosphate = RNA(n+1) + diphosphate. Its function is as follows. DNA-dependent RNA polymerase catalyzes the transcription of DNA into RNA using the four ribonucleoside triphosphates as substrates. This chain is DNA-directed RNA polymerase subunit beta', found in Cuscuta exaltata (Tall dodder).